The chain runs to 417 residues: Gamma-glutamyl phosphate reductase (417 aa).

Belongs to the gamma-glutamyl phosphate reductase family.

Its subcellular location is the cytoplasm. It catalyses the reaction L-glutamate 5-semialdehyde + phosphate + NADP(+) = L-glutamyl 5-phosphate + NADPH + H(+). It participates in amino-acid biosynthesis; L-proline biosynthesis; L-glutamate 5-semialdehyde from L-glutamate: step 2/2. Its function is as follows. Catalyzes the NADPH-dependent reduction of L-glutamate 5-phosphate into L-glutamate 5-semialdehyde and phosphate. The product spontaneously undergoes cyclization to form 1-pyrroline-5-carboxylate. The chain is Gamma-glutamyl phosphate reductase from Enterococcus faecalis (strain ATCC 700802 / V583).